Reading from the N-terminus, the 318-residue chain is Mitochondrial fission regulator 1 (318 aa).

2 disordered regions span residues 101–121 and 154–193; these read RPLRRQRSLPSLHQVEPAQQS and QEQSAQSTAPAPGGPPVPPPMVPVPPPPPPPPPCPTPSMQ. Positions 124-157 form a coiled coil; it reads VINDEAIQKISVLETELAKLRAQIAQIVQAQEQS. Low complexity predominate over residues 154 to 164; it reads QEQSAQSTAPA. Pro residues predominate over residues 165–189; that stretch reads PGGPPVPPPMVPVPPPPPPPPPCPT. A necessary and sufficient to promote mitochondrial fission region spans residues 168 to 296; the sequence is PPVPPPMVPV…TFTFTAFENK (129 aa).

This sequence belongs to the MTFR1 family.

The protein resides in the mitochondrion. In terms of biological role, may play a role in mitochondrial aerobic respiration. May also regulate mitochondrial organization and fission. The protein is Mitochondrial fission regulator 1 (mtfr1) of Danio rerio (Zebrafish).